Here is a 232-residue protein sequence, read N- to C-terminus: CD302 antigen (232 aa).

The signal sequence occupies residues 1-22 (MPRAAPPALLLPLLGLAAAAAA). The Extracellular segment spans residues 23–168 (DCPSSTWVQF…YEKKYLSDNR (146 aa)). The region spanning 32–152 (FQDSCYIFLQ…CEVSSVEGTL (121 aa)) is the C-type lectin domain. The N-linked (GlcNAc...) asparagine glycan is linked to N109. A disulfide bridge links C128 with C143. The helical transmembrane segment at 169–189 (ILISALVIASTVILTVLGAVV) threads the bilayer. Over 190-232 (WFLYKRSLDSGFTTVFSAAHQSPYNDDCVLVVAEENEYDIQFN) the chain is Cytoplasmic.

The protein resides in the membrane. Its subcellular location is the cell projection. The protein localises to the filopodium. It localises to the cytoplasm. It is found in the cell cortex. The protein resides in the microvillus. In terms of biological role, potential multifunctional C-type lectin receptor that may play roles in endocytosis and phagocytosis as well as in cell adhesion and migration. The polypeptide is CD302 antigen (Bos taurus (Bovine)).